Here is a 47-residue protein sequence, read N- to C-terminus: Large ribosomal subunit protein bL34 (47 aa).

This sequence belongs to the bacterial ribosomal protein bL34 family.

In Mycobacterium avium (strain 104), this protein is Large ribosomal subunit protein bL34.